The chain runs to 762 residues: 5-methyltetrahydropteroyltriglutamate--homocysteine methyltransferase (762 aa).

5-methyltetrahydropteroyltri-L-glutamate contacts are provided by residues 17–20 (REWK) and lysine 111. Residues 435–437 (IGS) and glutamate 488 contribute to the L-homocysteine site. L-methionine contacts are provided by residues 435-437 (IGS) and glutamate 488. Residues 519 to 520 (RC) and tryptophan 565 contribute to the 5-methyltetrahydropteroyltri-L-glutamate site. Position 603 (aspartate 603) interacts with L-homocysteine. Aspartate 603 lines the L-methionine pocket. Glutamate 609 provides a ligand contact to 5-methyltetrahydropteroyltri-L-glutamate. Histidine 645, cysteine 647, and glutamate 669 together coordinate Zn(2+). The active-site Proton donor is histidine 698. Cysteine 730 is a binding site for Zn(2+).

Belongs to the vitamin-B12 independent methionine synthase family. Zn(2+) serves as cofactor.

It catalyses the reaction 5-methyltetrahydropteroyltri-L-glutamate + L-homocysteine = tetrahydropteroyltri-L-glutamate + L-methionine. It functions in the pathway amino-acid biosynthesis; L-methionine biosynthesis via de novo pathway; L-methionine from L-homocysteine (MetE route): step 1/1. Catalyzes the transfer of a methyl group from 5-methyltetrahydrofolate to homocysteine resulting in methionine formation. The polypeptide is 5-methyltetrahydropteroyltriglutamate--homocysteine methyltransferase (Bacillus anthracis (strain CDC 684 / NRRL 3495)).